We begin with the raw amino-acid sequence, 469 residues long: Glutamate--tRNA ligase (469 aa).

Positions 9–19 (PSPTGMFHVGG) match the 'HIGH' region motif. Residues Cys-100, Cys-102, Cys-122, and Asp-124 each contribute to the Zn(2+) site. The 'KMSKS' region motif lies at 232-236 (KLSKR). Residue Lys-235 coordinates ATP.

Belongs to the class-I aminoacyl-tRNA synthetase family. Glutamate--tRNA ligase type 1 subfamily. As to quaternary structure, monomer. It depends on Zn(2+) as a cofactor.

It localises to the cytoplasm. The enzyme catalyses tRNA(Glu) + L-glutamate + ATP = L-glutamyl-tRNA(Glu) + AMP + diphosphate. Functionally, catalyzes the attachment of glutamate to tRNA(Glu) in a two-step reaction: glutamate is first activated by ATP to form Glu-AMP and then transferred to the acceptor end of tRNA(Glu). The chain is Glutamate--tRNA ligase from Salinispora arenicola (strain CNS-205).